A 394-amino-acid chain; its full sequence is Glycerol-1-phosphate dehydrogenase [NAD(P)+] (394 aa).

NAD(+) is bound by residues aspartate 54, 116 to 120, and 138 to 141; these read GTIHD and TAPS. Aspartate 143 provides a ligand contact to substrate. Residue serine 147 participates in NAD(+) binding. Residue aspartate 190 participates in substrate binding. 2 residues coordinate Ni(2+): aspartate 190 and histidine 270. Histidine 274 contributes to the substrate binding site. Position 290 (histidine 290) interacts with Ni(2+).

This sequence belongs to the glycerol-1-phosphate dehydrogenase family. Homodimer. The cofactor is Ni(2+).

Its subcellular location is the cytoplasm. The catalysed reaction is sn-glycerol 1-phosphate + NAD(+) = dihydroxyacetone phosphate + NADH + H(+). It carries out the reaction sn-glycerol 1-phosphate + NADP(+) = dihydroxyacetone phosphate + NADPH + H(+). Functionally, catalyzes the NAD(P)H-dependent reduction of dihydroxyacetonephosphate (DHAP or glycerone phosphate) to glycerol 1-phosphate (G1P). The G1P thus generated is probably used for the synthesis of phosphoglycerolipids in Gram-positive bacterial species. Prefers NADH over NADPH as coenzyme. Is also able to catalyze the reverse reaction, i.e. the NAD(+)-dependent oxidation of G1P but not of G3P. Does not possess glycerol dehydrogenase activity. This chain is Glycerol-1-phosphate dehydrogenase [NAD(P)+] (egsA), found in Bacillus subtilis (strain 168).